A 449-amino-acid polypeptide reads, in one-letter code: Zinc finger and BTB domain-containing protein 14 (449 aa).

In terms of domain architecture, BTB spans 36-102 (CDIAIVVEDV…MYTAKISVKK (67 aa)). Lys-46 participates in a covalent cross-link: Glycyl lysine isopeptide (Lys-Gly) (interchain with G-Cter in SUMO2). Positions 50-66 (HRCVLAACSTYFKKLFK) match the Nuclear localization signal motif. Residues 153 to 194 (GDAADTQDDDVEEIGDQDDSPSDDTVEGTPPSQEDGKSPTTT) are disordered. Acidic residues predominate over residues 157–178 (DTQDDDVEEIGDQDDSPSDDTV). Glycyl lysine isopeptide (Lys-Gly) (interchain with G-Cter in SUMO2) cross-links involve residues Lys-203 and Lys-249. 5 C2H2-type zinc fingers span residues 277-304 (IACQ…ADRP), 305-332 (FVCE…GYKP), 333-360 (YSCE…NERP), 361-388 (FACH…GEKP), and 389-417 (FVCG…ERKQ).

Belongs to the krueppel C2H2-type zinc-finger protein family. In terms of assembly, interacts with ZBTB21.

Its subcellular location is the nucleus. Its function is as follows. Transcriptional activator of the dopamine transporter (DAT), binding it's promoter at the consensus sequence 5'-CCTGCACAGTTCACGGA-3'. Binds to 5'-d(GCC)(n)-3' trinucleotide repeats in promoter regions and acts as a repressor of the FMR1 gene. Transcriptional repressor of MYC and thymidine kinase promoters. The chain is Zinc finger and BTB domain-containing protein 14 (ZBTB14) from Homo sapiens (Human).